Consider the following 228-residue polypeptide: MRAFSAATVRATTRKSFIPMAPRTPFVTPSFTKNVGSMRRMRFYSDEAKSEESKENNEDLTEEQSEIKKLESQLSAKTKEASELKDRLLRSVADFRNLQQVTKKDIQKAKDFALQKFAKDLLESVDNFGHALNAFKEEDLQKSKEISDLYTGVRMTRDVFENTLRKHGIEKLDPLGEPFDPNKHEATFELPQPDKEPGTVFHVQQLGFTLNDRVIRPAKVGIVKGEEN.

Residues 46–57 (DEAKSEESKENN) show a composition bias toward basic and acidic residues. The disordered stretch occupies residues 46–66 (DEAKSEESKENNEDLTEEQSE).

Belongs to the GrpE family. In terms of assembly, component of the PAM complex, at least composed of SSC1 (mtHsp70), MGE1, TIM44, PAM16/TIM16, PAM17 and PAM18/TIM14. Interacts with SSQ1. In terms of processing, the N-terminus is blocked.

It is found in the mitochondrion matrix. Functionally, essential component of the PAM complex, a complex required for the translocation of transit peptide-containing proteins from the inner membrane into the mitochondrial matrix in an ATP-dependent manner. Seems to control the nucleotide-dependent binding of SSC1 to substrate proteins and the association of SSC1 with TIM44. This is GrpE protein homolog, mitochondrial (MGE1) from Saccharomyces cerevisiae (strain ATCC 204508 / S288c) (Baker's yeast).